The chain runs to 376 residues: Arabinogalactan endo-beta-1,4-galactanase (376 aa).

Positions 1-17 (MKKKILAATAILLAAIA) are cleaved as a signal peptide. Glu161 (proton donor) is an active-site residue. The Nucleophile role is filled by Glu270. The Ca(2+) site is built by Asp281 and Asn285.

This sequence belongs to the glycosyl hydrolase 53 family. Requires Ca(2+) as cofactor.

It catalyses the reaction The enzyme specifically hydrolyzes (1-&gt;4)-beta-D-galactosidic linkages in type I arabinogalactans.. This Cellvibrio japonicus (strain Ueda107) (Pseudomonas fluorescens subsp. cellulosa) protein is Arabinogalactan endo-beta-1,4-galactanase (ganB).